Here is a 218-residue protein sequence, read N- to C-terminus: Uracil-DNA glycosylase (218 aa).

Aspartate 60 serves as the catalytic Proton acceptor.

It belongs to the uracil-DNA glycosylase (UDG) superfamily. UNG family.

It is found in the cytoplasm. The catalysed reaction is Hydrolyzes single-stranded DNA or mismatched double-stranded DNA and polynucleotides, releasing free uracil.. Functionally, excises uracil residues from the DNA which can arise as a result of misincorporation of dUMP residues by DNA polymerase or due to deamination of cytosine. This chain is Uracil-DNA glycosylase, found in Francisella philomiragia subsp. philomiragia (strain ATCC 25017 / CCUG 19701 / FSC 153 / O#319-036).